We begin with the raw amino-acid sequence, 157 residues long: Ribonuclease H (157 aa).

Residues 1-142 (MKKKIKIFID…CDFLAKISAK (142 aa)) enclose the RNase H type-1 domain. Mg(2+)-binding residues include D10, E48, D70, and D134.

Belongs to the RNase H family. In terms of assembly, monomer. Requires Mg(2+) as cofactor.

Its subcellular location is the cytoplasm. It catalyses the reaction Endonucleolytic cleavage to 5'-phosphomonoester.. Its function is as follows. Endonuclease that specifically degrades the RNA of RNA-DNA hybrids. This is Ribonuclease H from Wigglesworthia glossinidia brevipalpis.